We begin with the raw amino-acid sequence, 279 residues long: Beta-lactamase (279 aa).

An N-terminal signal peptide occupies residues 1-21 (MRYVRLCVISLLATLPLVVYA). Catalysis depends on S66, which acts as the Acyl-ester intermediate. An intrachain disulfide couples C73 to C119. 230 to 232 (KTG) contacts substrate.

This sequence belongs to the class-A beta-lactamase family.

It carries out the reaction a beta-lactam + H2O = a substituted beta-amino acid. This Klebsiella pneumoniae protein is Beta-lactamase.